Consider the following 263-residue polypeptide: Alpha-tubulin N-acetyltransferase 2 (263 aa).

The 181-residue stretch at 1–181 folds into the N-acetyltransferase domain; sequence MEIAFDLSTI…NKYALCSNFF (181 aa). 115–128 is an acetyl-CoA binding site; that stretch reads FFVVPTEQRSGNGF. 2 disordered regions span residues 191–223 and 242–263; these read TPRQTKRASRASSAVSSHASSRNTSPIGRNRPR and EVDPNSPTGLKNARDFGHRRIW. Positions 200–212 are enriched in low complexity; sequence RASSAVSSHASSR. Positions 253 to 263 are enriched in basic and acidic residues; it reads NARDFGHRRIW.

It belongs to the acetyltransferase ATAT1 family. Expressed in touch receptor neurons and in a subset of ciliated neurons, including PDE, ADE, CEP, and OLQ neurons.

It catalyses the reaction L-lysyl-[alpha-tubulin] + acetyl-CoA = N(6)-acetyl-L-lysyl-[alpha-tubulin] + CoA + H(+). Functionally, specifically acetylates 'Lys-40' in alpha-tubulin/mec-12 on the lumenal side of microtubules. Promotes microtubule destabilization and accelerates microtubule dynamics; this activity may be independent of acetylation activity. Acetylates alpha-tubulin with a slow enzymatic rate, due to a catalytic site that is not optimized for acetyl transfer. Enters the microtubule through each end and diffuses quickly throughout the lumen of microtubules. Acetylates only long/old microtubules because of its slow acetylation rate since it does not have time to act on dynamically unstable microtubules before the enzyme is released. Required for the maintenance of touch receptor neurons and possibly other type of neurons involved in locomotion. The chain is Alpha-tubulin N-acetyltransferase 2 (atat-2) from Caenorhabditis elegans.